A 241-amino-acid polypeptide reads, in one-letter code: Ribonuclease PH (241 aa).

Phosphate-binding positions include R89 and 127-129; that span reads GTR.

It belongs to the RNase PH family. In terms of assembly, homohexameric ring arranged as a trimer of dimers.

The catalysed reaction is tRNA(n+1) + phosphate = tRNA(n) + a ribonucleoside 5'-diphosphate. Its function is as follows. Phosphorolytic 3'-5' exoribonuclease that plays an important role in tRNA 3'-end maturation. Removes nucleotide residues following the 3'-CCA terminus of tRNAs; can also add nucleotides to the ends of RNA molecules by using nucleoside diphosphates as substrates, but this may not be physiologically important. Probably plays a role in initiation of 16S rRNA degradation (leading to ribosome degradation) during starvation. In Xanthomonas axonopodis pv. citri (strain 306), this protein is Ribonuclease PH.